The chain runs to 199 residues: Pneumococcal vaccine antigen A homolog (199 aa).

It localises to the cell surface. This chain is Pneumococcal vaccine antigen A homolog (pvaA), found in Streptococcus pyogenes serotype M3 (strain ATCC BAA-595 / MGAS315).